The primary structure comprises 429 residues: Dihydroorotase (429 aa).

2 residues coordinate Zn(2+): His-61 and His-63. Substrate contacts are provided by residues 63 to 65 (HYR) and Asn-95. Residues Asp-153, His-180, and His-233 each coordinate Zn(2+). Residue Asn-279 participates in substrate binding. Asp-306 serves as a coordination point for Zn(2+). Asp-306 is a catalytic residue. Substrate contacts are provided by residues His-310 and 324 to 325 (FG).

Belongs to the metallo-dependent hydrolases superfamily. DHOase family. Class I DHOase subfamily. Zn(2+) serves as cofactor.

It catalyses the reaction (S)-dihydroorotate + H2O = N-carbamoyl-L-aspartate + H(+). It participates in pyrimidine metabolism; UMP biosynthesis via de novo pathway; (S)-dihydroorotate from bicarbonate: step 3/3. Its function is as follows. Catalyzes the reversible cyclization of carbamoyl aspartate to dihydroorotate. The protein is Dihydroorotase of Ligilactobacillus salivarius (strain UCC118) (Lactobacillus salivarius).